Reading from the N-terminus, the 124-residue chain is Chemotaxis protein CheY1 (124 aa).

Residues lysine 2–leucine 120 enclose the Response regulatory domain. The Mg(2+) site is built by aspartate 7, aspartate 8, aspartate 53, and asparagine 55. Position 53 is a 4-aspartylphosphate (aspartate 53).

In terms of assembly, interacts (when phosphorylated) with FliM. It depends on Mg(2+) as a cofactor. Post-translationally, phosphorylated by CheAY. Dephosphorylated (inactivated) by CheZ.

The protein localises to the cytoplasm. Chemotactic response regulator protein that modulates the rotation direction of bacterial flagellar motors. Plays an important role in the colonization and infection of Helicobacter pylori. Upon phosphorylation by CheA, interacts with the flagellar motor protein FliM to cause clockwise flagellar rotation and bacterial reversals, as opposed to straight swimming when CheY1 is not phosphorylated. The polypeptide is Chemotaxis protein CheY1 (Helicobacter pylori (strain ATCC 700392 / 26695) (Campylobacter pylori)).